A 597-amino-acid polypeptide reads, in one-letter code: NADPH-dependent diflavin oxidoreductase 1 (597 aa).

A Flavodoxin-like domain is found at 6-150; the sequence is LLVLFGSQTG…AIDPWLQDLW (145 aa). FMN-binding positions include 12–17, 59–62, 97–106, and Asp-132; these read SQTGTA, ATTG, and LGDSSYAKFN. An FAD-binding FR-type domain is found at 206 to 446; the sequence is LQPFLAPMVS…WVRSGGLTFP (241 aa). FAD contacts are provided by residues Arg-350, 382–385, and 416–419; these read RAFS and GLCS. Residues Thr-460, 515–516, 521–525, and Asp-558 contribute to the NADP(+) site; these read SR and KVYVQ. Trp-596 lines the FAD pocket.

It belongs to the NADPH-dependent diflavin oxidoreductase NDOR1 family. In the N-terminal section; belongs to the flavodoxin family. This sequence in the C-terminal section; belongs to the flavoprotein pyridine nucleotide cytochrome reductase family. Interacts with CIAPIN1; as part of the cytosolic iron-sulfur (Fe-S) protein assembly (CIA) machinery. Interacts with DCPS. The cofactor is FAD. FMN serves as cofactor.

It localises to the cytoplasm. The protein localises to the perinuclear region. It catalyses the reaction 2 oxidized [2Fe-2S]-[protein] + NADPH = 2 reduced [2Fe-2S]-[protein] + NADP(+) + H(+). In terms of biological role, NADPH-dependent reductase which is a central component of the cytosolic iron-sulfur (Fe-S) protein assembly (CIA) machinery. Transfers electrons from NADPH via its FAD and FMN prosthetic groups to the [2Fe-2S] cluster of CIAPIN1, another key component of the CIA machinery. In turn, this reduced cluster provides electrons for assembly of cytosolic iron-sulfur cluster proteins. It can also reduce the [2Fe-2S] cluster of CISD1 and activate this protein implicated in Fe/S cluster repair. In vitro can fully activate methionine synthase/MTR in the presence of soluble cytochrome b5/CYB5A. In Bos taurus (Bovine), this protein is NADPH-dependent diflavin oxidoreductase 1.